Consider the following 449-residue polypeptide: Adenylosuccinate synthetase (449 aa).

GTP-binding positions include 12–18 (GDEGKGK) and 40–42 (GHT). D13 (proton acceptor) is an active-site residue. Residues D13 and G40 each contribute to the Mg(2+) site. Residues 13–16 (DEGK), 38–41 (NAGH), T128, R142, Q223, T238, and R302 contribute to the IMP site. The active-site Proton donor is the H41. Substrate is bound at residue 298–304 (TTTGRRR). GTP contacts are provided by residues R304, 330–332 (KLD), and 412–414 (SLG).

It belongs to the adenylosuccinate synthetase family. As to quaternary structure, homodimer. Mg(2+) serves as cofactor.

It is found in the cytoplasm. The enzyme catalyses IMP + L-aspartate + GTP = N(6)-(1,2-dicarboxyethyl)-AMP + GDP + phosphate + 2 H(+). The protein operates within purine metabolism; AMP biosynthesis via de novo pathway; AMP from IMP: step 1/2. Its function is as follows. Plays an important role in the de novo pathway of purine nucleotide biosynthesis. Catalyzes the first committed step in the biosynthesis of AMP from IMP. This is Adenylosuccinate synthetase from Gloeothece citriformis (strain PCC 7424) (Cyanothece sp. (strain PCC 7424)).